The primary structure comprises 433 residues: Pectinesterase B (433 aa).

The signal sequence occupies residues methionine 1–alanine 21. Cysteine 22 carries N-palmitoyl cysteine lipidation. A lipid anchor (S-diacylglycerol cysteine) is attached at cysteine 22. Residues cysteine 22 to glutamate 433 are Periplasmic-facing. The substrate site is built by threonine 202 and glutamine 236. The active-site Proton donor is aspartate 259. Aspartate 292 (nucleophile) is an active-site residue. Positions 356 and 358 each coordinate substrate.

Belongs to the pectinesterase family.

The protein localises to the cell outer membrane. It carries out the reaction [(1-&gt;4)-alpha-D-galacturonosyl methyl ester](n) + n H2O = [(1-&gt;4)-alpha-D-galacturonosyl](n) + n methanol + n H(+). Its pathway is glycan metabolism; pectin degradation; 2-dehydro-3-deoxy-D-gluconate from pectin: step 1/5. In terms of biological role, probably involved in the degradation of methylated oligogalacturonides present in the periplasm. More active on methylated oligogalacturides than on pectin. The polypeptide is Pectinesterase B (Dickeya dadantii (strain 3937) (Erwinia chrysanthemi (strain 3937))).